Here is a 723-residue protein sequence, read N- to C-terminus: tRNA (guanine(27)-N(2))-dimethyltransferase (723 aa).

Acidic residues predominate over residues 1–10 (MENMAEEELL). The interval 1–72 (MENMAEEELL…SLASVPEEAE (72 aa)) is disordered. Phosphothreonine is present on T23. The segment covering 32-44 (PAADTALDSAPTP) has biased composition (low complexity). Residues 45–59 (DSAPAPALAPAPAPA) are compositionally biased toward pro residues. S61 is modified (phosphoserine). The Nucleolar localization signal signature appears at 128–132 (HKLRR). The segment at 177-199 (YHCIICSATITRRTDMLGHVKRH) adopts a C2H2-type zinc-finger fold. Residues 220–679 (EVLKETDTDI…ASLTQFKSIL (460 aa)) enclose the Trm1 methyltransferase domain. Positions 253, 300, 348, and 349 each coordinate S-adenosyl-L-methionine. Residues C479, C482, C504, and C506 each contribute to the Zn(2+) site. K576 is covalently cross-linked (Glycyl lysine isopeptide (Lys-Gly) (interchain with G-Cter in SUMO2)). The residue at position 603 (S603) is a Phosphoserine.

It belongs to the class I-like SAM-binding methyltransferase superfamily. Trm1 family.

The protein localises to the nucleus. Its subcellular location is the nucleolus. The catalysed reaction is guanosine(27) in tRNA(Tyr) + 2 S-adenosyl-L-methionine = N(2)-dimethylguanosine(27) in tRNA(Tyr) + 2 S-adenosyl-L-homocysteine + 2 H(+). Its function is as follows. Specifically dimethylates a single guanine residue at position 27 of tRNA(Tyr) using S-adenosyl-L-methionine as donor of the methyl groups. Dimethylation at position 27 of tRNA(Tyr) is required for efficient translation of tyrosine codons. Also required to maintain 3-(3-amino-3-carboxypropyl)uridine (acp3U) in the D-loop of several cytoplasmic tRNAs. This chain is tRNA (guanine(27)-N(2))-dimethyltransferase, found in Rattus norvegicus (Rat).